A 132-amino-acid chain; its full sequence is Small ribosomal subunit protein uS12 (132 aa).

3-methylthioaspartic acid is present on aspartate 89. A disordered region spans residues 106 to 132 (GVKDRKKSRSKYGTKKPKEAAKTAAKK). Residues 109-120 (DRKKSRSKYGTK) show a composition bias toward basic residues.

Belongs to the universal ribosomal protein uS12 family. In terms of assembly, part of the 30S ribosomal subunit. Contacts proteins S8 and S17. May interact with IF1 in the 30S initiation complex.

Its function is as follows. With S4 and S5 plays an important role in translational accuracy. In terms of biological role, interacts with and stabilizes bases of the 16S rRNA that are involved in tRNA selection in the A site and with the mRNA backbone. Located at the interface of the 30S and 50S subunits, it traverses the body of the 30S subunit contacting proteins on the other side and probably holding the rRNA structure together. The combined cluster of proteins S8, S12 and S17 appears to hold together the shoulder and platform of the 30S subunit. The sequence is that of Small ribosomal subunit protein uS12 (rpsL) from Thermus thermophilus (strain ATCC BAA-163 / DSM 7039 / HB27).